Here is a 726-residue protein sequence, read N- to C-terminus: Catalase-peroxidase (726 aa).

The tract at residues 1 to 33 (MSTSDDIHNTTATGKCPFHQGGHDQSAGAGTTT) is disordered. Residues 105 to 226 (WHGAGTYRSI…LGATEMGLIY (122 aa)) constitute a cross-link (tryptophyl-tyrosyl-methioninium (Trp-Tyr) (with M-252)). Histidine 106 functions as the Proton acceptor in the catalytic mechanism. Residues 226-252 (YVNPEGPDHSGEPLSAAAAIRATFGNM) constitute a cross-link (tryptophyl-tyrosyl-methioninium (Tyr-Met) (with W-105)). Histidine 267 contacts heme b.

Belongs to the peroxidase family. Peroxidase/catalase subfamily. As to quaternary structure, homodimer or homotetramer. Requires heme b as cofactor. In terms of processing, formation of the three residue Trp-Tyr-Met cross-link is important for the catalase, but not the peroxidase activity of the enzyme.

It catalyses the reaction H2O2 + AH2 = A + 2 H2O. The catalysed reaction is 2 H2O2 = O2 + 2 H2O. Bifunctional enzyme with both catalase and broad-spectrum peroxidase activity. The chain is Catalase-peroxidase from Escherichia coli (strain K12 / DH10B).